The sequence spans 591 residues: Aspartate--tRNA(Asp/Asn) ligase (591 aa).

Glu174 contacts L-aspartate. An aspartate region spans residues Gln198–Lys201. Arg220 contributes to the L-aspartate binding site. ATP contacts are provided by residues Arg220–Glu222 and Gln229. His450 is an L-aspartate binding site. Glu483 is a binding site for ATP. L-aspartate is bound at residue Arg490. Gly535–Arg538 provides a ligand contact to ATP.

The protein belongs to the class-II aminoacyl-tRNA synthetase family. Type 1 subfamily. In terms of assembly, homodimer.

It is found in the cytoplasm. The enzyme catalyses tRNA(Asx) + L-aspartate + ATP = L-aspartyl-tRNA(Asx) + AMP + diphosphate. In terms of biological role, aspartyl-tRNA synthetase with relaxed tRNA specificity since it is able to aspartylate not only its cognate tRNA(Asp) but also tRNA(Asn). Reaction proceeds in two steps: L-aspartate is first activated by ATP to form Asp-AMP and then transferred to the acceptor end of tRNA(Asp/Asn). The sequence is that of Aspartate--tRNA(Asp/Asn) ligase from Pseudomonas fluorescens (strain ATCC BAA-477 / NRRL B-23932 / Pf-5).